The primary structure comprises 107 residues: Replication initiation control protein YabA (107 aa).

Zn(2+) contacts are provided by histidine 81, cysteine 83, cysteine 97, and cysteine 100.

It belongs to the YabA family. As to quaternary structure, homotetramer. Interacts with both DnaA and DnaN, acting as a bridge between these two proteins. Requires Zn(2+) as cofactor.

Its subcellular location is the cytoplasm. The protein resides in the nucleoid. Involved in control of chromosome replication initiation. Inhibits the cooperative binding of DnaA to the oriC region, thus negatively regulating initiation of chromosome replication. Inhibits the ability of DnaA-ATP to form a helix on DNA; does not disassemble preformed DnaA-DNA helices. Decreases the residence time of DnaA on the chromosome at its binding sites (oriC, replication forks and promoter-binding sites). Tethers DnaA to the replication machinery via the DNA polymerase beta sliding clamp subunit (dnaN). Associates with oriC and other DnaA targets on the chromosome in a DnaA-dependent manner. The chain is Replication initiation control protein YabA from Streptococcus equi subsp. zooepidemicus (strain MGCS10565).